An 81-amino-acid chain; its full sequence is Protein translocase subunit SecE (81 aa).

A helical membrane pass occupies residues 50–70; it reads VAVILMVILVSTVIYFVDQIF.

Belongs to the SecE/SEC61-gamma family. In terms of assembly, component of the Sec protein translocase complex. Heterotrimer consisting of SecY, SecE and SecG subunits. The heterotrimers can form oligomers, although 1 heterotrimer is thought to be able to translocate proteins. Interacts with the ribosome. Interacts with SecDF, and other proteins may be involved. Interacts with SecA.

It localises to the cell inner membrane. The protein resides in the cellular thylakoid membrane. Its function is as follows. Essential subunit of the Sec protein translocation channel SecYEG. Clamps together the 2 halves of SecY. May contact the channel plug during translocation. The protein is Protein translocase subunit SecE of Synechocystis sp. (strain ATCC 27184 / PCC 6803 / Kazusa).